A 127-amino-acid polypeptide reads, in one-letter code: Fluoride-specific ion channel FluC (127 aa).

The next 4 membrane-spanning stretches (helical) occupy residues 4 to 24, 34 to 54, 65 to 85, and 97 to 117; these read IIYI…TQIA, FPFP…IGFF, FELR…FSTL, and FYGI…LAVL. The Na(+) site is built by Gly-77 and Thr-80.

The protein belongs to the fluoride channel Fluc/FEX (TC 1.A.43) family.

The protein resides in the cell inner membrane. The catalysed reaction is fluoride(in) = fluoride(out). Its activity is regulated as follows. Na(+) is not transported, but it plays an essential structural role and its presence is essential for fluoride channel function. Its function is as follows. Fluoride-specific ion channel. Important for reducing fluoride concentration in the cell, thus reducing its toxicity. This Bacteroides fragilis (strain ATCC 25285 / DSM 2151 / CCUG 4856 / JCM 11019 / LMG 10263 / NCTC 9343 / Onslow / VPI 2553 / EN-2) protein is Fluoride-specific ion channel FluC.